The sequence spans 89 residues: UPF0175 protein ssl1255 (89 aa).

This sequence belongs to the UPF0175 family.

The chain is UPF0175 protein ssl1255 from Synechocystis sp. (strain ATCC 27184 / PCC 6803 / Kazusa).